Here is a 370-residue protein sequence, read N- to C-terminus: ATP synthase gamma chain, chloroplastic (370 aa).

The N-terminal 54 residues, 1-54, are a transit peptide targeting the chloroplast; it reads MRSFCIAALLAVASAFTTQPTSFTVKTANVGERASGVFPEQSSAHRTRKATIVM. Residue Cys-145 is part of the active site.

This sequence belongs to the ATPase gamma chain family. F-type ATPases have 2 components, CF(1) - the catalytic core - and CF(0) - the membrane proton channel. CF(1) has five subunits: alpha(3), beta(3), gamma(1), delta(1), epsilon(1). CF(0) has four main subunits: a, b, b' and c.

Its subcellular location is the plastid. It is found in the chloroplast thylakoid membrane. In terms of biological role, produces ATP from ADP in the presence of a proton gradient across the membrane. The gamma chain is believed to be important in regulating ATPase activity and the flow of protons through the CF(0) complex. This is ATP synthase gamma chain, chloroplastic (ATPC) from Phaeodactylum tricornutum (Diatom).